The chain runs to 505 residues: Maturase K (505 aa).

Belongs to the intron maturase 2 family. MatK subfamily.

It localises to the plastid. The protein localises to the chloroplast. Its function is as follows. Usually encoded in the trnK tRNA gene intron. Probably assists in splicing its own and other chloroplast group II introns. This is Maturase K from Calycanthus occidentalis (Spice bush).